We begin with the raw amino-acid sequence, 206 residues long: MNNLLLINASPRGQGSHGNQLALELVSSLRQRYPHLELVERDLGANPLPPLGMDYAHALTTPTPFDAPLFEVSEGLIGELERSDALLIATPMHNFTLPAALKLWIDYVLRIHRTFSSGPEGKVGLLKDRPVHVLVSSGGFHQGERARQPDFLTPYLRQVLNTLGLFDLQFTYLQGLVFGDEAVRATLDEARSALSLQPLFNPLVCA.

Residues S10 and 136–139 (SSGG) contribute to the FMN site.

The protein belongs to the azoreductase type 1 family. In terms of assembly, homodimer. Requires FMN as cofactor.

The enzyme catalyses 2 a quinone + NADH + H(+) = 2 a 1,4-benzosemiquinone + NAD(+). It catalyses the reaction N,N-dimethyl-1,4-phenylenediamine + anthranilate + 2 NAD(+) = 2-(4-dimethylaminophenyl)diazenylbenzoate + 2 NADH + 2 H(+). Functionally, quinone reductase that provides resistance to thiol-specific stress caused by electrophilic quinones. Also exhibits azoreductase activity. Catalyzes the reductive cleavage of the azo bond in aromatic azo compounds to the corresponding amines. This Pseudomonas fluorescens (strain ATCC BAA-477 / NRRL B-23932 / Pf-5) protein is FMN-dependent NADH:quinone oxidoreductase 4.